Consider the following 85-residue polypeptide: Conotoxin Mi15b (85 aa).

Residues 1–23 (MEKLTVLILVAIVLLTIQVLGQS) form the signal peptide. Positions 24-49 (DRDKHPKRRPRQYATKRLSALMKGHR) are excised as a propeptide. A Pyrrolidone carboxylic acid modification is found at Q50.

This sequence belongs to the conotoxin O2 superfamily. Post-translationally, contains 4 disulfide bonds. As to expression, expressed by the venom duct.

It is found in the secreted. The polypeptide is Conotoxin Mi15b (Conus miles (Soldier cone)).